The following is a 43-amino-acid chain: MNIKRMLFKQGLYTLNVTPKGDTTKWSVNDWIKFIDENGNWEI.

This is an uncharacterized protein from Escherichia coli (Bacteriophage T4).